Reading from the N-terminus, the 941-residue chain is Myosin heavy chain kinase D (941 aa).

A coiled-coil region spans residues 8–48 (KLSKKIEKILEKNDYLKKKVEQLTKSVDNHEFKIQELLLLL). 3 stretches are compositionally biased toward low complexity: residues 57 to 70 (TTTT…NNST), 84 to 115 (TSTD…TTTS), and 124 to 206 (NSNN…PQLS). Disordered stretches follow at residues 57–234 (TTTT…KEDS) and 276–310 (SSNN…QQQQ). Positions 289–317 (SILNDQQNQQQNQQQQNQQQQQEEINFIT) form a coiled coil. The Alpha-type protein kinase domain maps to 337 to 582 (EYSANDDEWT…ICLQFGLPPI (246 aa)). 7 WD repeats span residues 635–674 (GHDE…DLSK), 683–720 (AHRR…TTTT), 741–780 (DHTA…CIKS), 783–820 (AHGK…CVYG), 824–861 (AHDA…PTTT), 864–902 (QHNM…EPIK), and 909–941 (AHRS…WKNK).

This sequence belongs to the protein kinase superfamily. Alpha-type protein kinase family. ALPK subfamily.

It carries out the reaction L-threonyl-[myosin heavy-chain] + ATP = O-phospho-L-threonyl-[myosin heavy-chain] + ADP + H(+). Its function is as follows. Phosphorylates threonine. Not critical for regulating the assembly and disassembly of myosin II filament. In Dictyostelium discoideum (Social amoeba), this protein is Myosin heavy chain kinase D (mhkD).